Reading from the N-terminus, the 245-residue chain is 7-cyano-7-deazaguanine synthase (245 aa).

19 to 29 (FSGGQDSATCL) is an ATP binding site. Zn(2+) contacts are provided by Cys207, Cys222, Cys225, and Cys228.

This sequence belongs to the QueC family. It depends on Zn(2+) as a cofactor.

The enzyme catalyses 7-carboxy-7-deazaguanine + NH4(+) + ATP = 7-cyano-7-deazaguanine + ADP + phosphate + H2O + H(+). Its pathway is purine metabolism; 7-cyano-7-deazaguanine biosynthesis. In terms of biological role, catalyzes the ATP-dependent conversion of 7-carboxy-7-deazaguanine (CDG) to 7-cyano-7-deazaguanine (preQ(0)). The sequence is that of 7-cyano-7-deazaguanine synthase from Gluconacetobacter diazotrophicus (strain ATCC 49037 / DSM 5601 / CCUG 37298 / CIP 103539 / LMG 7603 / PAl5).